Consider the following 120-residue polypeptide: MSDNITSARATARFVRVSPMKARRVIDLVRGKTVVEALSILKYAPQAASEPVAKVVASAAANAENNFGLDPRTLVISEAYADEGPTMRRFQPRAQGRAFQIRKRSSHITVVVESQKEGAN.

This sequence belongs to the universal ribosomal protein uL22 family. As to quaternary structure, part of the 50S ribosomal subunit.

Its function is as follows. This protein binds specifically to 23S rRNA; its binding is stimulated by other ribosomal proteins, e.g. L4, L17, and L20. It is important during the early stages of 50S assembly. It makes multiple contacts with different domains of the 23S rRNA in the assembled 50S subunit and ribosome. The globular domain of the protein is located near the polypeptide exit tunnel on the outside of the subunit, while an extended beta-hairpin is found that lines the wall of the exit tunnel in the center of the 70S ribosome. The protein is Large ribosomal subunit protein uL22 of Corynebacterium efficiens (strain DSM 44549 / YS-314 / AJ 12310 / JCM 11189 / NBRC 100395).